A 262-amino-acid chain; its full sequence is Membrane protein US15 (262 aa).

7 consecutive transmembrane segments (helical) span residues 46–66, 77–97, 108–128, 133–153, 163–183, 186–206, and 226–246; these read GAVG…CYAA, CLTE…VIFI, IGVL…ICLC, LVIS…GVAL, QIVV…VVIL, GWSW…CLAV, and LLAA…VLRI.

Belongs to the HHV-5 US12 protein family.

It is found in the host membrane. The chain is Membrane protein US15 (US15) from Human cytomegalovirus (strain Merlin) (HHV-5).